The sequence spans 424 residues: Tubulin gamma chain, nucleomorph (424 aa).

GTP is bound at residue 137-143; that stretch reads NGGTGAG.

Belongs to the tubulin family.

Tubulin is the major constituent of microtubules. The gamma chain is found at microtubule organizing centers (MTOC) such as the spindle poles or the centrosome, suggesting that it is involved in the minus-end nucleation of microtubule assembly. The protein is Tubulin gamma chain, nucleomorph (tubG) of Guillardia theta (Cryptophyte).